A 170-amino-acid polypeptide reads, in one-letter code: Small ribosomal subunit protein uS3mB (170 aa).

Residues 1-30 (MAAPVMSAFGRLQGLIRTERSLLTHVQSRC) constitute a mitochondrion transit peptide.

It belongs to the universal ribosomal protein uS3 family. In terms of assembly, component of the mitochondrial ribosome small subunit (28S) which comprises a 12S rRNA and about 30 distinct proteins.

It is found in the mitochondrion. The protein is Small ribosomal subunit protein uS3mB (mrps24-b) of Xenopus laevis (African clawed frog).